The chain runs to 304 residues: Fructose permease IIC component (304 aa).

The PTS EIIC type-2 domain maps to 1–304 (IHSADPKDPT…GIIKKPVEEK (304 aa)). Helical transmembrane passes span 20–40 (FIGS…FIAM), 62–82 (NAGF…VILL), 98–118 (PVLI…QFVI), 140–160 (NLVL…GGPL), 181–201 (AAIM…TTFF), 214–234 (ITCY…FAAA), 238–258 (VIPA…FFRV), and 277–297 (LLYL…LGII).

Its subcellular location is the cell membrane. Functionally, the phosphoenolpyruvate-dependent sugar phosphotransferase system (PTS), a major carbohydrate active -transport system, catalyzes the phosphorylation of incoming sugar substrates concomitant with their translocation across the cell membrane. This system is involved in fructose transport. The polypeptide is Fructose permease IIC component (fruA) (Bacillus amyloliquefaciens (Bacillus velezensis)).